We begin with the raw amino-acid sequence, 113 residues long: uncharacterized protein (113 aa).

2 disordered regions span residues 1-22 and 90-113; these read MGEH…PLAQ and DGRH…SDDL. Residues 90-99 show a composition bias toward basic and acidic residues; sequence DGRHTTESSF. A compositionally biased stretch (low complexity) spans 100-113; it reads EHSSPSRSPQSDDL.

This is an uncharacterized protein from Mycobacterium tuberculosis (strain ATCC 25618 / H37Rv).